The chain runs to 245 residues: Orotidine 5'-phosphate decarboxylase (245 aa).

Residues Asp22, Lys44, 71 to 80, Thr131, Arg192, Gln201, Gly221, and Arg222 each bind substrate; that span reads DLKFHDIPNT. The active-site Proton donor is Lys73.

The protein belongs to the OMP decarboxylase family. Type 1 subfamily. As to quaternary structure, homodimer.

The catalysed reaction is orotidine 5'-phosphate + H(+) = UMP + CO2. It functions in the pathway pyrimidine metabolism; UMP biosynthesis via de novo pathway; UMP from orotate: step 2/2. Functionally, catalyzes the decarboxylation of orotidine 5'-monophosphate (OMP) to uridine 5'-monophosphate (UMP). The protein is Orotidine 5'-phosphate decarboxylase of Salmonella newport (strain SL254).